A 219-amino-acid polypeptide reads, in one-letter code: Transmembrane emp24 domain-containing protein 10 (219 aa).

A signal peptide spans 1-31 (MSGLSGPPTRRGPFPLALLLLFLLGPSLVLA). The interval 1 to 142 (MSGLSGPPTR…KNYEEIAKVE (142 aa)) is required for interaction with STX17. The Lumenal segment spans residues 32-185 (ISFHLPINSR…RDTNESTNTR (154 aa)). The GOLD domain occupies 41–193 (RKCLREEIHK…TRVLYFSIFS (153 aa)). Arg171 and Arg176 each carry dimethylated arginine. A glycan (N-linked (GlcNAc...) asparagine) is linked at Asn179. A helical transmembrane segment spans residues 186 to 206 (VLYFSIFSMFCLIGLATWQVF). An interaction with COPG1 region spans residues 204–219 (QVFYLRRFFKAKKLIE). At 207-219 (YLRRFFKAKKLIE) the chain is on the cytoplasmic side. Residues 207-219 (YLRRFFKAKKLIE) form an interaction with ARF1 and IL1B region. Residues 211 to 212 (FF) carry the COPII vesicle coat-binding motif. Residues 211 to 219 (FFKAKKLIE) carry the COPI vesicle coat-binding motif.

It belongs to the EMP24/GP25L family. As to quaternary structure, predominantly dimeric and to a lesser extent monomeric in the ER. Monomer and dimer in ERGIC and cis-Golgi network. Forms homooligomer (via GOLD domain); the assembly is promoted by direct binding with leaderless cargos and may form a protein channel that facilitates cargo entry into the ERGIC. Forms heterooligomeric complexes with other members of the p24 family such as TMED2, TMED7 and TMED9. Interacts (via GOLD domain) with TMED2 (via GOLD domain); the complex is required for export of TMED10 from the ER to the cis-Golgi network; the complex is proposed to be involved in cis-Golgi network dynamics and / or biogenesis. Associates with the COPI vesicle coat subunits (coatomer). Tetramerization of the cytoplasmic domain at the Golgi membrane in vitro; the complex is proposed to interact with COPI coatomer and induce budding of the vesicles. Interacts with COPG1; the interaction involves TMED10 homodimer. Interacts with ARF1 (GDP-bound); the interaction probably involves a TMED10 oligomer. Interacts with SEC23A, SEC24B, SEC24C and SEC24D components of the coat protein complex II/COPII, indicative of an association of TMED10 with the COPII vesicle coat. Interacts with CD59. Interacts with MPPE1/PGAP5; the complex might recruit and sort GPI-anchored proteins to the ER-exit site, or the interaction might lead to recycling of PGAP5 between the ER and the Golgi. Interacts with F2LR1/PAR2. Interacts with KDELR2/ERD2; the interaction is disrupted by KDELR2 ligand. Found in a complex composed at least of SURF4, TMED2 and TMED10. Associates with the presenilin-dependent gamma-secretase complex. Interacts with STX17; the interaction is direct. Interacts with IL-1; the interaction is direct. Interacts with RAB21 (active GTP-bound form); the interaction is indirect and regulates TMED10 abundance and localization at the Golgi.

It is found in the endoplasmic reticulum membrane. Its subcellular location is the endoplasmic reticulum-Golgi intermediate compartment membrane. The protein localises to the golgi apparatus membrane. The protein resides in the golgi apparatus. It localises to the cis-Golgi network membrane. It is found in the trans-Golgi network membrane. Its subcellular location is the cytoplasmic vesicle. The protein localises to the secretory vesicle membrane. The protein resides in the cell membrane. It localises to the melanosome. Its function is as follows. Cargo receptor involved in protein vesicular trafficking and quality control in the endoplasmic reticulum (ER) and Golgi. The p24 protein family is a group of transmembrane proteins that bind coat protein complex I/COPI and coat protein complex II/COPII involved in vesicular trafficking between the membranes. Acts at the lumenal side for incorporation of secretory cargo molecules into transport vesicles and involved in vesicle coat formation at the cytoplasmic side. Mainly functions in the early secretory pathway and cycles between the ER, ER-Golgi intermediate compartment (ERGIC) and Golgi, mediating cargo transport through COPI and COPII-coated vesicles. In COPII vesicle-mediated anterograde transport, involved in the transport of GPI-anchored proteins by acting together with TMED2 as their cargo receptor; the function specifically implies SEC24C and SEC24D of the COPII vesicle coat and lipid raft-like microdomains of the ER. Recognizes GPI anchors structural remodeled in the ER by the GPI inositol-deacylase/PGAP1 and the metallophosphoesterase MPPE1/PGAP5. In COPI vesicle-mediated retrograde transport, involved in the biogenesis of COPI vesicles and vesicle coat recruitment. Involved in trafficking of amyloid beta A4 protein and soluble APP-beta release (independent from the modulation of gamma-secretase activity). Involved in the KDELR2-mediated retrograde transport of the toxin A subunit (CTX-A-K63)together with COPI and the COOH terminus of KDELR2. On Golgi membranes, acts as a primary receptor for ARF1-GDP, a GTP-binding protein involved in COPI-vesicle formation. Increases coatomer-dependent GTPase-activating activity of ARFGAP2 which mediates the hydrolysis of ARF1-bound GTP and therefore modulates protein trafficking from the Golgi apparatus. Involved in the exocytic trafficking of G protein-coupled receptors F2LR1/PAR2 (trypsin and tryspin-like enzyme receptor), OPRM1 (opioid receptor) and P2RY4 (UTD and UDP receptor) from the Golgi to the plasma membrane, thus contributing to receptor resensitization. In addition to its cargo receptor activity, may also act as a protein channel after oligomerization, facilitating the post-translational entry of leaderless cytoplasmic cargo into the ERGIC. Involved in the translocation into ERGIC, the vesicle entry and the secretion of leaderless cargos (lacking the secretion signal sequence), including the mature form of interleukin 1/IL-1 family members, the alpha-crystallin B chain HSPB5, the carbohydrate-binding proteins galectin-1/LGALS1 and galectin-3/LGALS3, the microtubule-associated protein Tau/MAPT, and the annexin A1/ANXA1; the translocation process is dependent on cargo protein unfolding and enhanced by chaperones HSP90AB1 and HSP90B1/GRP9. Could also associates with the presenilin-dependent gamma-secretase complex in order to regulate gamma-cleavages of the amyloid beta A4 protein to yield amyloid-beta 40/Abeta40. The sequence is that of Transmembrane emp24 domain-containing protein 10 (TMED10) from Pongo abelii (Sumatran orangutan).